The chain runs to 205 residues: Casparian strip membrane protein 4 (205 aa).

Residues 1 to 58 (MDIEKTGSRREEEEPIVQKPKLEKGKGKAHVFAPPMNYSRIMEKHKQEKVSMAGWKRG) are Cytoplasmic-facing. The helical transmembrane segment at 59–79 (VAIFDFVLRLIAAITAMAAAA) threads the bilayer. Topologically, residues 80-109 (KMATTEETLPFFTQFLQFSADYTDLPTLSS) are extracellular. Residues 110–130 (FVIVNSIVGGYLTLSLPFSIV) form a helical membrane-spanning segment. At 131–148 (CILRPLAVPPRLFLILCD) the chain is on the cytoplasmic side. A helical membrane pass occupies residues 149 to 169 (TAMMGLTMVAASASAAIVYLA). The Extracellular segment spans residues 170 to 205 (HNGNSSSNWLPVCQQFGDFCKERVAPWWLPLLQRLF). An N-linked (GlcNAc...) asparagine glycan is attached at asparagine 173.

It belongs to the Casparian strip membrane proteins (CASP) family. In terms of assembly, homodimer and heterodimers.

It localises to the cell membrane. Its function is as follows. Regulates membrane-cell wall junctions and localized cell wall deposition. Required for establishment of the Casparian strip membrane domain (CSD) and the subsequent formation of Casparian strips, a cell wall modification of the root endodermis that determines an apoplastic barrier between the intraorganismal apoplasm and the extraorganismal apoplasm and prevents lateral diffusion. The polypeptide is Casparian strip membrane protein 4 (Raphanus sativus (Radish)).